Reading from the N-terminus, the 230-residue chain is Large ribosomal subunit protein uL1 (230 aa).

The protein belongs to the universal ribosomal protein uL1 family. Part of the 50S ribosomal subunit.

Functionally, binds directly to 23S rRNA. The L1 stalk is quite mobile in the ribosome, and is involved in E site tRNA release. Protein L1 is also a translational repressor protein, it controls the translation of the L11 operon by binding to its mRNA. The chain is Large ribosomal subunit protein uL1 from Acholeplasma laidlawii (strain PG-8A).